A 117-amino-acid chain; its full sequence is Large ribosomal subunit protein bL20 (117 aa).

It belongs to the bacterial ribosomal protein bL20 family.

Binds directly to 23S ribosomal RNA and is necessary for the in vitro assembly process of the 50S ribosomal subunit. It is not involved in the protein synthesizing functions of that subunit. The protein is Large ribosomal subunit protein bL20 of Vibrio campbellii (strain ATCC BAA-1116).